The primary structure comprises 444 residues: Methylenetetrahydrofolate--tRNA-(uracil-5-)-methyltransferase TrmFO (444 aa).

9 to 14 (GAGLAG) provides a ligand contact to FAD.

This sequence belongs to the MnmG family. TrmFO subfamily. The cofactor is FAD.

The protein localises to the cytoplasm. The catalysed reaction is uridine(54) in tRNA + (6R)-5,10-methylene-5,6,7,8-tetrahydrofolate + NADH + H(+) = 5-methyluridine(54) in tRNA + (6S)-5,6,7,8-tetrahydrofolate + NAD(+). It catalyses the reaction uridine(54) in tRNA + (6R)-5,10-methylene-5,6,7,8-tetrahydrofolate + NADPH + H(+) = 5-methyluridine(54) in tRNA + (6S)-5,6,7,8-tetrahydrofolate + NADP(+). Catalyzes the folate-dependent formation of 5-methyl-uridine at position 54 (M-5-U54) in all tRNAs. The chain is Methylenetetrahydrofolate--tRNA-(uracil-5-)-methyltransferase TrmFO from Koribacter versatilis (strain Ellin345).